Consider the following 1263-residue polypeptide: DNA-directed RNA polymerase subunit beta (1263 aa).

This sequence belongs to the RNA polymerase beta chain family. In terms of assembly, the RNAP catalytic core consists of 2 alpha, 1 beta, 1 beta' and 1 omega subunit. When a sigma factor is associated with the core the holoenzyme is formed, which can initiate transcription.

It catalyses the reaction RNA(n) + a ribonucleoside 5'-triphosphate = RNA(n+1) + diphosphate. DNA-dependent RNA polymerase catalyzes the transcription of DNA into RNA using the four ribonucleoside triphosphates as substrates. This Thermotoga maritima (strain ATCC 43589 / DSM 3109 / JCM 10099 / NBRC 100826 / MSB8) protein is DNA-directed RNA polymerase subunit beta.